A 420-amino-acid polypeptide reads, in one-letter code: Glutamyl-tRNA reductase (420 aa).

Substrate contacts are provided by residues 49–52 (TCNR), Ser-107, 112–114 (EPQ), and Gln-118. Residue Cys-50 is the Nucleophile of the active site. 187–192 (GAGETI) is an NADP(+) binding site.

The protein belongs to the glutamyl-tRNA reductase family. In terms of assembly, homodimer.

It carries out the reaction (S)-4-amino-5-oxopentanoate + tRNA(Glu) + NADP(+) = L-glutamyl-tRNA(Glu) + NADPH + H(+). It participates in porphyrin-containing compound metabolism; protoporphyrin-IX biosynthesis; 5-aminolevulinate from L-glutamyl-tRNA(Glu): step 1/2. Its function is as follows. Catalyzes the NADPH-dependent reduction of glutamyl-tRNA(Glu) to glutamate 1-semialdehyde (GSA). The polypeptide is Glutamyl-tRNA reductase (Photobacterium profundum (strain SS9)).